A 263-amino-acid polypeptide reads, in one-letter code: Endonuclease 8 (263 aa).

The active-site Schiff-base intermediate with DNA is proline 2. The active-site Proton donor is glutamate 3. Lysine 53 (proton donor; for beta-elimination activity) is an active-site residue. DNA contacts are provided by glutamine 70, arginine 125, and asparagine 169. Residues 229–263 (KVFHRDGEACERCGGIIEKTTLSSRPFYWCPHCQK) form an FPG-type zinc finger. The Proton donor; for delta-elimination activity role is filled by arginine 253.

Belongs to the FPG family. It depends on Zn(2+) as a cofactor.

The catalysed reaction is 2'-deoxyribonucleotide-(2'-deoxyribose 5'-phosphate)-2'-deoxyribonucleotide-DNA = a 3'-end 2'-deoxyribonucleotide-(2,3-dehydro-2,3-deoxyribose 5'-phosphate)-DNA + a 5'-end 5'-phospho-2'-deoxyribonucleoside-DNA + H(+). In terms of biological role, involved in base excision repair of DNA damaged by oxidation or by mutagenic agents. Acts as a DNA glycosylase that recognizes and removes damaged bases. Has a preference for oxidized pyrimidines, such as thymine glycol, 5,6-dihydrouracil and 5,6-dihydrothymine. Has AP (apurinic/apyrimidinic) lyase activity and introduces nicks in the DNA strand. Cleaves the DNA backbone by beta-delta elimination to generate a single-strand break at the site of the removed base with both 3'- and 5'-phosphates. The chain is Endonuclease 8 from Salmonella heidelberg (strain SL476).